Reading from the N-terminus, the 571-residue chain is Proline--tRNA ligase (571 aa).

This sequence belongs to the class-II aminoacyl-tRNA synthetase family. ProS type 1 subfamily. As to quaternary structure, homodimer.

The protein resides in the cytoplasm. The catalysed reaction is tRNA(Pro) + L-proline + ATP = L-prolyl-tRNA(Pro) + AMP + diphosphate. Its function is as follows. Catalyzes the attachment of proline to tRNA(Pro) in a two-step reaction: proline is first activated by ATP to form Pro-AMP and then transferred to the acceptor end of tRNA(Pro). As ProRS can inadvertently accommodate and process non-cognate amino acids such as alanine and cysteine, to avoid such errors it has two additional distinct editing activities against alanine. One activity is designated as 'pretransfer' editing and involves the tRNA(Pro)-independent hydrolysis of activated Ala-AMP. The other activity is designated 'posttransfer' editing and involves deacylation of mischarged Ala-tRNA(Pro). The misacylated Cys-tRNA(Pro) is not edited by ProRS. This is Proline--tRNA ligase from Vibrio atlanticus (strain LGP32) (Vibrio splendidus (strain Mel32)).